A 746-amino-acid polypeptide reads, in one-letter code: Hyperosmolality-gated Ca2+ permeable channel 2.1 (746 aa).

The next 10 helical transmembrane spans lie at 3-23 (ISALLTSAGINISICIVLLSL), 90-110 (MVIFSIRIFFIVAVICIAFVL), 144-164 (LWVHCLALYIITSAACLLLYF), 357-377 (IATLVGAVAFMFVFLIPVTFI), 405-425 (VITGYLPSVILILFFYAVPPL), 445-465 (ACIKVLYFTIWNVFFVNILSG), 492-512 (AGFFMTYCFTSGWASLACEIM), 560-580 (VIAPLILPFLLIYFFLAYLIY), 601-621 (IFHNTTIFSLILTQIIALGFF), and 623-643 (LKLSTVASGFTIPLILLTLLF). Polar residues predominate over residues 692 to 702 (LHSQKSSSKAE). Positions 692–723 (LHSQKSSSKAECSNPFKKQELPDPEKLKPEEG) are disordered. Positions 708–723 (KKQELPDPEKLKPEEG) are enriched in basic and acidic residues.

It belongs to the CSC1 (TC 1.A.17) family.

It is found in the membrane. Functionally, acts as an osmosensitive calcium-permeable cation channel. The sequence is that of Hyperosmolality-gated Ca2+ permeable channel 2.1 from Arabidopsis thaliana (Mouse-ear cress).